We begin with the raw amino-acid sequence, 336 residues long: Nitrilase (336 aa).

Positions 5–278 (LKVACVQAAP…EGLLYATLDP (274 aa)) constitute a CN hydrolase domain. Residue glutamate 45 is the Proton acceptor of the active site. Catalysis depends on lysine 127, which acts as the Proton donor. Residue cysteine 161 is the Nucleophile of the active site.

This sequence belongs to the carbon-nitrogen hydrolase superfamily. Nitrilase family.

It carries out the reaction a nitrile + 2 H2O = a carboxylate + NH4(+). The enzyme catalyses (indol-3-yl)acetonitrile + 2 H2O = (indol-3-yl)acetate + NH4(+). It catalyses the reaction phenylpropanonitrile + 2 H2O = 3-phenylpropanoate + NH4(+). In terms of biological role, arylacetonitrilase which is capable of hydrolyzing indole-3-acetonitrile (IAN) to the plant hormone indole-3-acetate (IAA), and allows the plant pathogenic bacterium to use IAN as a sole nitrogen source. Is also able to hydrolyze phenylpropionitrile (PPN), allowing the use of this compound as a sole nitrogen source. This enzyme may represent an additional mechanism for IAA biosynthesis or may be used to degrade and assimilate aldoximes and nitriles produced during host plant secondary metabolism. The protein is Nitrilase of Pseudomonas syringae pv. syringae (strain B728a).